We begin with the raw amino-acid sequence, 532 residues long: Wee1-like protein kinase 2 (532 aa).

The tract at residues 123 to 166 (INPFTPDTVRRNSEHYKRKSQRSDDDEDYGPRSKEIQNSSEDES) is disordered. One can recognise a Protein kinase domain in the interval 188-465 (FLELACIGVG…RHDVLCKERA (278 aa)). ATP is bound by residues 194–202 (IGVGEFGSV) and K217. Residue D315 is the Proton acceptor of the active site. Mg(2+) is bound by residues N320 and D354. Residues 469-495 (ATQLRKELNVEKFRTAMLERELKEARL) adopt a coiled-coil conformation.

It belongs to the protein kinase superfamily. Ser/Thr protein kinase family. WEE1 subfamily.

The protein resides in the nucleus. The catalysed reaction is L-tyrosyl-[protein] + ATP = O-phospho-L-tyrosyl-[protein] + ADP + H(+). Functionally, oocyte-specific protein tyrosine kinase that phosphorylates and inhibits cdk1 and acts as a key regulator of meiosis. Required to maintain meiotic arrest in oocytes by phosphorylating cdk1 at 'Tyr-15', leading to inhibit cdk1 activity and prevent meiotic reentry. The protein is Wee1-like protein kinase 2 (wee2) of Danio rerio (Zebrafish).